A 513-amino-acid chain; its full sequence is Aromatic amino acid aminotransferase 2 (513 aa).

Phosphoserine is present on residues S90 and S92. Pyridoxal 5'-phosphate contacts are provided by residues Y102, 143-144 (SN), N232, Y263, and 314-316 (TFS). N232 is a substrate binding site. Position 317 is an N6-(pyridoxal phosphate)lysine (K317). Residue R324 coordinates pyridoxal 5'-phosphate. R481 contributes to the substrate binding site.

This sequence belongs to the class-I pyridoxal-phosphate-dependent aminotransferase family. Pyridoxal 5'-phosphate is required as a cofactor.

It localises to the cytoplasm. It catalyses the reaction an aromatic L-alpha-amino acid + 2-oxoglutarate = an aromatic oxo-acid + L-glutamate. It carries out the reaction an aromatic L-alpha-amino acid + 4-methylsulfanyl-2-oxobutanoate = an aromatic oxo-acid + L-methionine. The enzyme catalyses L-kynurenine + 2-oxoglutarate = kynurenate + L-glutamate + H2O. Its pathway is amino-acid biosynthesis; L-methionine biosynthesis via salvage pathway; L-methionine from S-methyl-5-thio-alpha-D-ribose 1-phosphate: step 6/6. It participates in amino-acid degradation; L-kynurenine degradation; kynurenate from L-kynurenine: step 1/2. Functionally, general aromatic amino acid transaminase involved in several otherwise unrelated metabolic pathways. Mainly involved in tryptophan degradation. Active with phenylalanine, tyrosine and tryptophan as amino donors and with phenylpyruvate, hydroxyphenylpyruvate and pyruvate as amino acceptors. Does not accept glutamate or 2-oxoglutarate as substrates. Also active with methionine, leucine, glutamine and kynurenine. Catalyzes the formation of methionine from 2-keto-4-methylthiobutyrate (KMTB) in the methionine salvage pathway primarily using aromatic amino acids (tyrosine, phenylalanine and tryptophan) as the amino donors. Catalyzes the irreversible transamination of the L-tryptophan metabolite L-kynurenine to form kynurenic acid (KA) with pyruvate as amino acceptor. The sequence is that of Aromatic amino acid aminotransferase 2 from Saccharomyces cerevisiae (strain ATCC 204508 / S288c) (Baker's yeast).